A 927-amino-acid chain; its full sequence is Isoleucine--tRNA ligase (927 aa).

Residues 57-67 (PFANGNIHMGH) carry the 'HIGH' region motif. An L-isoleucyl-5'-AMP-binding site is contributed by Glu-553. Residues 594 to 598 (KMSKS) carry the 'KMSKS' region motif. Position 597 (Lys-597) interacts with ATP. Zn(2+)-binding residues include Cys-886, Cys-889, Cys-906, and Cys-909.

This sequence belongs to the class-I aminoacyl-tRNA synthetase family. IleS type 1 subfamily. In terms of assembly, monomer. Zn(2+) serves as cofactor.

The protein resides in the cytoplasm. It carries out the reaction tRNA(Ile) + L-isoleucine + ATP = L-isoleucyl-tRNA(Ile) + AMP + diphosphate. Functionally, catalyzes the attachment of isoleucine to tRNA(Ile). As IleRS can inadvertently accommodate and process structurally similar amino acids such as valine, to avoid such errors it has two additional distinct tRNA(Ile)-dependent editing activities. One activity is designated as 'pretransfer' editing and involves the hydrolysis of activated Val-AMP. The other activity is designated 'posttransfer' editing and involves deacylation of mischarged Val-tRNA(Ile). The chain is Isoleucine--tRNA ligase from Lactobacillus helveticus (strain DPC 4571).